A 79-amino-acid chain; its full sequence is U-actitoxin-Avd9d (79 aa).

The signal sequence occupies residues 1–19 (NLKVLAVFVLCAILVVVTA). Positions 20–37 (ERRGTETGGYKKDTLEDL) are excised as a propeptide. In terms of domain architecture, ShKT spans 44 to 79 (CFDSFKEATCHMAKTNRLCKTSAKYQINCKKTCGLC). Disulfide bonds link cysteine 44/cysteine 79, cysteine 53/cysteine 72, and cysteine 62/cysteine 76. The interval 67–68 (KY) is crucial for binding to potassium channels.

This sequence belongs to the sea anemone type 1 potassium channel toxin family. Type 1b subfamily.

Its subcellular location is the secreted. The protein resides in the nematocyst. In terms of biological role, inhibits voltage-gated potassium channels (Kv1/KCNA). The polypeptide is U-actitoxin-Avd9d (Anemonia viridis (Snakelocks anemone)).